Reading from the N-terminus, the 86-residue chain is Sec-independent protein translocase protein TatA (86 aa).

The chain crosses the membrane as a helical span at residues 1–21 (MGISIWQLLIILAIVLVLFGA).

This sequence belongs to the TatA/E family. As to quaternary structure, the Tat system comprises two distinct complexes: a TatABC complex, containing multiple copies of TatA, TatB and TatC subunits, and a separate TatA complex, containing only TatA subunits. Substrates initially bind to the TatABC complex, which probably triggers association of the separate TatA complex to form the active translocon.

Its subcellular location is the cell inner membrane. Part of the twin-arginine translocation (Tat) system that transports large folded proteins containing a characteristic twin-arginine motif in their signal peptide across membranes. TatA could form the protein-conducting channel of the Tat system. The protein is Sec-independent protein translocase protein TatA of Hydrogenovibrio crunogenus (strain DSM 25203 / XCL-2) (Thiomicrospira crunogena).